The chain runs to 174 residues: Protein GrpE (174 aa).

Belongs to the GrpE family. In terms of assembly, homodimer.

It is found in the cytoplasm. Its function is as follows. Participates actively in the response to hyperosmotic and heat shock by preventing the aggregation of stress-denatured proteins, in association with DnaK and GrpE. It is the nucleotide exchange factor for DnaK and may function as a thermosensor. Unfolded proteins bind initially to DnaJ; upon interaction with the DnaJ-bound protein, DnaK hydrolyzes its bound ATP, resulting in the formation of a stable complex. GrpE releases ADP from DnaK; ATP binding to DnaK triggers the release of the substrate protein, thus completing the reaction cycle. Several rounds of ATP-dependent interactions between DnaJ, DnaK and GrpE are required for fully efficient folding. The polypeptide is Protein GrpE (Pseudothermotoga lettingae (strain ATCC BAA-301 / DSM 14385 / NBRC 107922 / TMO) (Thermotoga lettingae)).